A 265-amino-acid polypeptide reads, in one-letter code: Indole-3-glycerol phosphate synthase (265 aa).

It belongs to the TrpC family.

The enzyme catalyses 1-(2-carboxyphenylamino)-1-deoxy-D-ribulose 5-phosphate + H(+) = (1S,2R)-1-C-(indol-3-yl)glycerol 3-phosphate + CO2 + H2O. The protein operates within amino-acid biosynthesis; L-tryptophan biosynthesis; L-tryptophan from chorismate: step 4/5. This Desulforamulus reducens (strain ATCC BAA-1160 / DSM 100696 / MI-1) (Desulfotomaculum reducens) protein is Indole-3-glycerol phosphate synthase.